A 222-amino-acid polypeptide reads, in one-letter code: UPF0758 protein CT0611 (222 aa).

One can recognise an MPN domain in the interval 100 to 222 (KVKGARDVFE…WFSFRDHALL (123 aa)). Zn(2+)-binding residues include His-171, His-173, and Asp-184. The JAMM motif signature appears at 171–184 (HNHPSGDVQPSNAD).

It belongs to the UPF0758 family.

In Chlorobaculum tepidum (strain ATCC 49652 / DSM 12025 / NBRC 103806 / TLS) (Chlorobium tepidum), this protein is UPF0758 protein CT0611.